A 456-amino-acid polypeptide reads, in one-letter code: Myricetin 3-O-rhamnosyltransferase UGT77B2 (456 aa).

Catalysis depends on His-19, which acts as the Proton acceptor. His-19 contacts an anthocyanidin. The active-site Charge relay is Asp-116. His-147 serves as a coordination point for an anthocyanidin. Positions 279, 334, 351, 355, and 359 each coordinate UDP-beta-L-rhamnose. Ala-374 contributes to the an anthocyanidin binding site.

The protein belongs to the UDP-glycosyltransferase family. As to expression, expressed in young cromes.

The enzyme catalyses myricetin + UDP-beta-L-rhamnose = myricetin 3-O-alpha-L-rhamnoside + UDP + H(+). It participates in flavonoid metabolism. Rhamnosyltransferase involved in montbretin A (MbA) biosynthesis. Catalyzes the 3-O rhamnosylation of myricetin to produce myricetin 3-O-alpha-L-rhamnoside (MR), a precursor of MbA. MbA is a potent inhibitor of human pancreatic alpha-amylase and is being developed as drug candidate to treat type-2 diabetes. In vitro, is able to transfer UDP-glucose and UDP-xylose with 50-fold less efficiency compared with UDP-rhamnose. In vitro, can use kaempferol or quercetin as substrates, although these two flavonols may not be physiological substrates in vivo. This is Myricetin 3-O-rhamnosyltransferase UGT77B2 from Crocosmia x crocosmiiflora (Montbretia).